An 84-amino-acid chain; its full sequence is Small ribosomal subunit protein uS17 (84 aa).

Belongs to the universal ribosomal protein uS17 family. Part of the 30S ribosomal subunit.

One of the primary rRNA binding proteins, it binds specifically to the 5'-end of 16S ribosomal RNA. The chain is Small ribosomal subunit protein uS17 from Legionella pneumophila (strain Paris).